The chain runs to 64 residues: uncharacterized protein (64 aa).

Residues 33–55 traverse the membrane as a helical segment; it reads YTPLGSYMIFGIVHYFCSYHIGI.

The protein resides in the membrane. This is an uncharacterized protein from Saccharomyces cerevisiae (strain ATCC 204508 / S288c) (Baker's yeast).